A 343-amino-acid chain; its full sequence is 3-dehydroquinate synthase (343 aa).

NAD(+)-binding positions include S61–K66, G95–D99, T119–T120, K132, K141, and F159–T162. The Zn(2+) site is built by E174, H231, and H248.

Belongs to the sugar phosphate cyclases superfamily. Dehydroquinate synthase family. Co(2+) is required as a cofactor. Requires Zn(2+) as cofactor. It depends on NAD(+) as a cofactor.

The protein resides in the cytoplasm. The enzyme catalyses 7-phospho-2-dehydro-3-deoxy-D-arabino-heptonate = 3-dehydroquinate + phosphate. It participates in metabolic intermediate biosynthesis; chorismate biosynthesis; chorismate from D-erythrose 4-phosphate and phosphoenolpyruvate: step 2/7. Catalyzes the conversion of 3-deoxy-D-arabino-heptulosonate 7-phosphate (DAHP) to dehydroquinate (DHQ). The protein is 3-dehydroquinate synthase of Helicobacter pylori (strain G27).